Reading from the N-terminus, the 91-residue chain is Class I hydrophobin E (91 aa).

Positions 1–16 (MKFSIAAIALAAVAVA) are cleaved as a signal peptide. 4 disulfide bridges follow: Cys30-Cys72, Cys42-Cys64, Cys43-Cys55, and Cys73-Cys89. The N-linked (GlcNAc...) asparagine glycan is linked to Asn83.

The protein belongs to the fungal hydrophobin family.

Its subcellular location is the secreted. It is found in the cell wall. The protein localises to the vacuole. It localises to the cytoplasmic vesicle. Aerial growth, conidiation, and dispersal of filamentous fungi in the environment rely upon a capability of their secreting small amphipathic proteins called hydrophobins (HPBs) with low sequence identity. Class I can self-assemble into an outermost layer of rodlet bundles on aerial cell surfaces, conferring cellular hydrophobicity that supports fungal growth, development and dispersal; whereas Class II form highly ordered films at water-air interfaces through intermolecular interactions but contribute nothing to the rodlet structure. Hyd1E contributes to certain cell wall-related features, such as hydrophobicity but is not involved in cell wall-related events during fungal proliferation in host hemocoel. Does not contribute to conidial hydrophobicity. The sequence is that of Class I hydrophobin E from Beauveria bassiana (strain ARSEF 2860) (White muscardine disease fungus).